An 82-amino-acid polypeptide reads, in one-letter code: Small ribosomal subunit protein bS16 (82 aa).

Belongs to the bacterial ribosomal protein bS16 family.

The chain is Small ribosomal subunit protein bS16 from Dehalococcoides mccartyi (strain ATCC BAA-2100 / JCM 16839 / KCTC 5957 / BAV1).